The chain runs to 292 residues: Probable 2-(5''-triphosphoribosyl)-3'-dephosphocoenzyme-A synthase (292 aa).

Belongs to the CitG/MdcB family.

It catalyses the reaction 3'-dephospho-CoA + ATP = 2'-(5''-triphospho-alpha-D-ribosyl)-3'-dephospho-CoA + adenine. This chain is Probable 2-(5''-triphosphoribosyl)-3'-dephosphocoenzyme-A synthase, found in Shigella sonnei (strain Ss046).